A 530-amino-acid chain; its full sequence is MHFAIILLFLLVIIAIVYTYVDLIDVHHEEVRYPITVFDNTRAPLIEPPSEIVIEGNAHECHKTLTPCFTHGDCDLCREGLANCQLFDEDTIVKMRGDDGQEHETLIRAGEAYCLALDRERARSCNPNTGVWLLAETETGFALLCNCLRPGLVTQLNMYEDCNVPVGCAPHGRIDNINSASIRCVCDDGYVSDYNADTETPYCRPRTVRDVMYDESFFPRAPCADGQVRLDHPALNDFYRRHFRLEDICVIDPCSVDPISGQRTSGRLFHQPTVNGVGINGCNCPADDGLLPVFNRHTADTGMVRQSDRTVANACLQPFNVHMLSLRHVDYKFFWGRSDHTEFADADMVFQANVNQLSHERYRAILYSLLESHPDVTEIVTVNMGVMKISVSYDTTLKNILLPSSVFRLFRFKESGTAQPVCFFPGVGRCITVNSDSCIRRHAGGQVWTAETFTNSWCVLSREGTHIKVWSRASRYPRGDAPAALRLRGFFLNNDRERNTIRAVTTGDMTQGQQIDALTQILETYPNYSV.

A signal peptide spans 1–15; that stretch reads MHFAIILLFLLVIIA.

As to quaternary structure, forms the PIF complex together with PIF2 and PIF3. The complex also interacts with per os infectivity factor PIF0.

It is found in the virion membrane. Per os infectivity factor that mediates the specific binding of occluded virions (ODV) to the host midgut target cells. The polypeptide is Per os infectivity factor 1 (Autographa californica nuclear polyhedrosis virus (AcMNPV)).